The sequence spans 744 residues: Elongation factor G, mitochondrial (744 aa).

The N-terminal 33 residues, 1–33 (MTISNLIRSRCSLAAAKSFLENVKSFSSHATFA), are a transit peptide targeting the mitochondrion. Residues 39 to 317 (EKIRNIGISA…VLDYLPHPGE (279 aa)) form the tr-type G domain. GTP contacts are provided by residues 48-55 (AHIDSGKT), 115-119 (DTPGH), and 169-172 (NKLD).

The protein belongs to the TRAFAC class translation factor GTPase superfamily. Classic translation factor GTPase family. EF-G/EF-2 subfamily.

Its subcellular location is the mitochondrion. It functions in the pathway protein biosynthesis; polypeptide chain elongation. Its function is as follows. Mitochondrial GTPase that catalyzes the GTP-dependent ribosomal translocation step during translation elongation. During this step, the ribosome changes from the pre-translocational (PRE) to the post-translocational (POST) state as the newly formed A-site-bound peptidyl-tRNA and P-site-bound deacylated tRNA move to the P and E sites, respectively. Catalyzes the coordinated movement of the two tRNA molecules, the mRNA and conformational changes in the ribosome. This chain is Elongation factor G, mitochondrial, found in Anopheles gambiae (African malaria mosquito).